Consider the following 397-residue polypeptide: 16-O-methyltransferase bsc6 (397 aa).

Asp262 lines the S-adenosyl-L-methionine pocket. Catalysis depends on His302, which acts as the Proton acceptor.

This sequence belongs to the class I-like SAM-binding methyltransferase superfamily. Cation-independent O-methyltransferase family. The cofactor is S-adenosyl-L-methionine.

The protein operates within mycotoxin biosynthesis. Its function is as follows. 16-O-methyltransferase; part of the gene cluster that mediates the biosynthesis of the diterpene glucoside brassicicene C. In the first step of the brassicicene C biosynthesis, the bifunctional diterpene synthase bsc8 that possesses both prenyl transferase and terpene cyclase activity, converts isopentenyl diphosphate and dimethylallyl diphosphate into geranylgeranyl diphosphate (GGDP) that is further converted into fusicocca-2,10(14)-diene, the first precursor for brassicicene C. Fusicocca-2,10(14)-diene is then substrate of cytochrome P450 monooxygenase bsc1 for hydroxylation at the C-8 position. Oxidation at C-16 position to aldehyde is then catalyzed by the cytochrome P450 monooyxygenase bsc7, yielding fusicocca-2,10(14)-diene-8-beta,16-diol. Follows the isomerization of the double bond and reduction of aldehyde to alcohol catalyzed by the short-chain dehydrogenase/reductase bsc3 to yield the diol compound fusicocca-1,10(14)-diene-8 beta,16-diol. The next step is the oxidation at the C-3 position of fusicocca-2,10(14)-diene-8-beta,16-diol catalyzed by the alpha-ketoglutarate dependent dioxygenase bsc9, to produce a triol compound. Methylation of the hydroxy group at position 16 is performed by the methyltransferase bsc6. 16-O-methylation is followed by oxidation at the C-13 position to ketone and an alkyl shift of the methyl group leads to brassicicene C. Although the probable acetyltransferase bsc4 is included in the gene cluster, no acetylation reactions are necessary for brassicicene C biosynthesis. However, the fact that brassicicene E, which is a structurally related compound having an acetoxy group at position 12, was previously isolated from another strain of A.brassicicola suggests that the ATCC 96836 strain might also produce a small amount of brassicicene E. This Alternaria brassicicola (Dark leaf spot agent) protein is 16-O-methyltransferase bsc6.